The sequence spans 404 residues: Acetate kinase (404 aa).

Asn9 lines the Mg(2+) pocket. Lys16 is a binding site for ATP. Arg100 contributes to the substrate binding site. The active-site Proton donor/acceptor is the Asp157. ATP is bound by residues His215–Gly219, Asp290–Arg292, and Gly335–Asn339. Glu386 contributes to the Mg(2+) binding site.

It belongs to the acetokinase family. In terms of assembly, homodimer. Requires Mg(2+) as cofactor. Mn(2+) is required as a cofactor.

The protein localises to the cytoplasm. The catalysed reaction is acetate + ATP = acetyl phosphate + ADP. It participates in metabolic intermediate biosynthesis; acetyl-CoA biosynthesis; acetyl-CoA from acetate: step 1/2. Catalyzes the formation of acetyl phosphate from acetate and ATP. Can also catalyze the reverse reaction. The polypeptide is Acetate kinase (Methylocella silvestris (strain DSM 15510 / CIP 108128 / LMG 27833 / NCIMB 13906 / BL2)).